The sequence spans 316 residues: Ornithine carbamoyltransferase (316 aa).

Residues 57–60 (STRT), Q84, R108, and 135–138 (HPCQ) each bind carbamoyl phosphate. Residues N166, D230, and 234–235 (SM) each bind L-ornithine. Carbamoyl phosphate is bound by residues 269-270 (CL) and R297.

The protein belongs to the aspartate/ornithine carbamoyltransferase superfamily. OTCase family.

Its subcellular location is the cytoplasm. The catalysed reaction is carbamoyl phosphate + L-ornithine = L-citrulline + phosphate + H(+). The protein operates within amino-acid degradation; L-arginine degradation via ADI pathway; carbamoyl phosphate from L-arginine: step 2/2. Functionally, reversibly catalyzes the transfer of the carbamoyl group from carbamoyl phosphate (CP) to the N(epsilon) atom of ornithine (ORN) to produce L-citrulline. In Bacillus anthracis (strain CDC 684 / NRRL 3495), this protein is Ornithine carbamoyltransferase.